The following is a 505-amino-acid chain: Deoxyguanosinetriphosphate triphosphohydrolase (505 aa).

An HD domain is found at 66-273 (RLTHSMEVQQ…MEAADDISYC (208 aa)).

Belongs to the dGTPase family. Type 1 subfamily. As to quaternary structure, homotetramer. Requires Mg(2+) as cofactor.

It carries out the reaction dGTP + H2O = 2'-deoxyguanosine + triphosphate + H(+). DGTPase preferentially hydrolyzes dGTP over the other canonical NTPs. This chain is Deoxyguanosinetriphosphate triphosphohydrolase, found in Serratia proteamaculans (strain 568).